The chain runs to 720 residues: Secreted RxLR effector protein 138 (720 aa).

A signal peptide spans 1-20 (MRSAFYVAIVLLVAAGSQTA). The RxLR-dEER signature appears at 56-71 (RNLKDDFMFSAGDEER). The tract at residues 264–335 (ESNTRKRNNV…VAPPEPSRLD (72 aa)) is disordered. Positions 320–335 (KQHDHRVAPPEPSRLD) are enriched in basic and acidic residues. The N-linked (GlcNAc...) asparagine glycan is linked to N609.

It belongs to the RxLR effector family.

The protein localises to the secreted. The protein resides in the host nucleus. In terms of biological role, secreted effector that acts as an elicitor that induces cell death in host plant cells. In Plasmopara viticola (Downy mildew of grapevine), this protein is Secreted RxLR effector protein 138.